Reading from the N-terminus, the 208-residue chain is FMRFamide-like neuropeptide 18 (208 aa).

The first 21 residues, methionine 1 to alanine 21, serve as a signal peptide directing secretion. A propeptide spanning residues tyrosine 22–glutamine 83 is cleaved from the precursor. Position 93 is a phenylalanine amide (phenylalanine 93). Residues alanine 97 to glutamate 101 constitute a propeptide that is removed on maturation. Phenylalanine 111 bears the Phenylalanine amide mark. The propeptide occupies serine 115–glutamate 119. Phenylalanine amide is present on phenylalanine 129. The propeptide occupies aspartate 133–aspartate 137. Phenylalanine 147 bears the Phenylalanine amide mark. Positions aspartate 151–aspartate 158 are excised as a propeptide. Phenylalanine amide occurs at positions 169 and 180. A propeptide spanning residues serine 184–leucine 195 is cleaved from the precursor. Phenylalanine 205 is modified (phenylalanine amide).

The protein belongs to the FARP (FMRFamide related peptide) family. Post-translationally, may be processed by convertase egl-3. Expressed in head neurons and weakly in ventral nerve cord. Expressed in the interneurons AVA, AIY and RIG, the motor neuron RIM and the pharyngeal neurons M2 and M3. EMPGVLRF-amide: Expressed in cholinergic pharyngeal motoneurons M2 and M3.

Its subcellular location is the secreted. Its function is as follows. FMRFamide-like neuropeptides. Ligand to G-protein coupled receptor npr-1. Involved in modulating locomotion quiescence during the sleep-like state called lethargus which occurs during molting between larval and adult stages, acting via npr-1. Together with flp-1, plays a homeostatic role by acting on the GABAergic neural transmission at neuromuscular junctions to prevent overexcitation of the locomotor circuit. Plays a role in the navigational capacity of sperm and the targeting of sperm derived from males to the fertilization site in the uterus of hermaphrodites. In terms of biological role, SVPGVLRF-amide: Excites muscle tension. Functionally, activates the G-protein coupled receptor npr-1 more effectively than other flp-18 peptides. Inhibits the activity of dissected pharyngeal myogenic muscle system. The protein is FMRFamide-like neuropeptide 18 of Caenorhabditis elegans.